A 460-amino-acid polypeptide reads, in one-letter code: Ecdysteroid UDP-glucosyltransferase (460 aa).

A signal peptide spans 1 to 18; sequence MFISILLLALAVERILCA.

It belongs to the UDP-glycosyltransferase family.

Functionally, catalyzes the transfer of glucose from UDP-glucose to ecdysteroids which are insect molting hormones. Expression of egt interferes with normal insect development and block molting. In Lacanobia oleracea granulosis virus (LoGV), this protein is Ecdysteroid UDP-glucosyltransferase (EGT).